Consider the following 163-residue polypeptide: Seed allergenic protein RAG1 (163 aa).

Positions 1–27 (MASNKVVFSVLLLVVLSVLAAAMATMA) are cleaved as a signal peptide. 5 disulfides stabilise this stretch: Cys-39–Cys-90, Cys-53–Cys-78, Cys-61–Cys-122, Cys-79–Cys-138, and Cys-92–Cys-150.

This sequence belongs to the cereal trypsin/alpha-amylase inhibitor family. Five disulfide bonds are present.

The protein resides in the secreted. Functionally, seed storage protein. The sequence is that of Seed allergenic protein RAG1 (RAG1) from Oryza sativa subsp. japonica (Rice).